Here is a 231-residue protein sequence, read N- to C-terminus: Small ribosomal subunit protein bS18c (231 aa).

Disordered stretches follow at residues 1–31 and 95–231; these read MEKSERPLIKKKRPFRKKKRSFRKRRSPIES and QKEE…TRKK. Positions 9-26 are enriched in basic residues; the sequence is IKKKRPFRKKKRSFRKRR. Composition is skewed to basic and acidic residues over residues 95–151, 159–169, and 212–231; these read QKEE…EFQR, TNEKQTNEKQT, and TNEKQTKSNDRTTDLRTRKK.

Belongs to the bacterial ribosomal protein bS18 family. As to quaternary structure, part of the 30S ribosomal subunit.

It is found in the plastid. The protein resides in the chloroplast. This is Small ribosomal subunit protein bS18c from Jasminum nudiflorum (Winter jasmine).